A 740-amino-acid polypeptide reads, in one-letter code: NAD(P)H-quinone oxidoreductase subunit 5, chloroplastic (740 aa).

16 helical membrane-spanning segments follow: residues 9 to 29 (WIIPFIPLPVPMLIGAGLILF), 40 to 60 (WAFQSVLLLSIVMIFSIYLSI), 89 to 109 (IDPLTSIMSILITTVGIMVLI), 125 to 145 (FAYMSFFSTSMLGLVTSSNLI), 147 to 167 (IYIFWELVGLCSYLLIGFWFT), 185 to 205 (GDFGLLLGILGFYWITGSFEF), 219 to 239 (NEVNFLFVTLCAVLLFAGAVA), 258 to 278 (TPISALIHAATMVAAGIFLVA), 286 to 306 (VIPYIMYLISVIGIITVLLGA), 327 to 347 (LGYMMLALGMGSYRSALFHLI), 354 to 374 (ALLFLGSGSIIHSMETIVGYS), 396 to 416 (ITFLLGTLSLCGIPPLACFWS), 425 to 445 (WLYSPIFAIIAWATAGLTAFY), 543 to 563 (LFPIFVLGLFTLFVGSIGIPF), 602 to 622 (VLSVSIAYFGIFLASFLYKPI), and 718 to 738 (YLFLYLAYVSVFLLVYYLFFL).

This sequence belongs to the complex I subunit 5 family. As to quaternary structure, NDH is composed of at least 16 different subunits, 5 of which are encoded in the nucleus.

Its subcellular location is the plastid. The protein localises to the chloroplast thylakoid membrane. It carries out the reaction a plastoquinone + NADH + (n+1) H(+)(in) = a plastoquinol + NAD(+) + n H(+)(out). It catalyses the reaction a plastoquinone + NADPH + (n+1) H(+)(in) = a plastoquinol + NADP(+) + n H(+)(out). NDH shuttles electrons from NAD(P)H:plastoquinone, via FMN and iron-sulfur (Fe-S) centers, to quinones in the photosynthetic chain and possibly in a chloroplast respiratory chain. The immediate electron acceptor for the enzyme in this species is believed to be plastoquinone. Couples the redox reaction to proton translocation, and thus conserves the redox energy in a proton gradient. The polypeptide is NAD(P)H-quinone oxidoreductase subunit 5, chloroplastic (ndhF) (Atropa belladonna (Belladonna)).